The sequence spans 1358 residues: Phosphoribosylformylglycinamidine synthase (1358 aa).

N-acetylthreonine is present on Thr2. Residues 339-363 are disordered; the sequence is AVSPFPGAATGSGGEIRDEGATGRG. ATP contacts are provided by residues 345–356, 424–426, and Ala719; these read GAATGSGGEIRD and NGY. Positions 720, 762, 766, and 930 each coordinate Mg(2+). Ser932 contributes to the ATP binding site. In terms of domain architecture, Glutamine amidotransferase type-1 spans 1093-1358; it reads VAILREQGVN…LFRSARRWVG (266 aa). Cys1187 serves as the catalytic Nucleophile. Active-site residues include His1319 and Glu1321.

The protein in the N-terminal section; belongs to the FGAMS family.

Its subcellular location is the cytoplasm. It carries out the reaction N(2)-formyl-N(1)-(5-phospho-beta-D-ribosyl)glycinamide + L-glutamine + ATP + H2O = 2-formamido-N(1)-(5-O-phospho-beta-D-ribosyl)acetamidine + L-glutamate + ADP + phosphate + H(+). Its pathway is purine metabolism; IMP biosynthesis via de novo pathway; 5-amino-1-(5-phospho-D-ribosyl)imidazole from N(2)-formyl-N(1)-(5-phospho-D-ribosyl)glycinamide: step 1/2. Functionally, phosphoribosylformylglycinamidine synthase involved in the purines biosynthetic pathway. Catalyzes the ATP-dependent conversion of formylglycinamide ribonucleotide (FGAR) and glutamine to yield formylglycinamidine ribonucleotide (FGAM) and glutamate. This chain is Phosphoribosylformylglycinamidine synthase (ADE6), found in Saccharomyces cerevisiae (strain ATCC 204508 / S288c) (Baker's yeast).